Consider the following 294-residue polypeptide: Probable metallo-hydrolase BURPS1710b_2304 (294 aa).

Residues H68, H70, D72, H73, H143, D170, and H212 each contribute to the a divalent metal cation site.

This sequence belongs to the metallo-beta-lactamase superfamily. It depends on a divalent metal cation as a cofactor.

In terms of biological role, probable hydrolase. Does not have beta-lactamase activity. The polypeptide is Probable metallo-hydrolase BURPS1710b_2304 (Burkholderia pseudomallei (strain 1710b)).